A 67-amino-acid polypeptide reads, in one-letter code: Small ribosomal subunit protein eS17 (67 aa).

This sequence belongs to the eukaryotic ribosomal protein eS17 family.

The protein is Small ribosomal subunit protein eS17 of Haloquadratum walsbyi (strain DSM 16790 / HBSQ001).